The chain runs to 142 residues: HTH-type transcriptional regulator MntR (142 aa).

An HTH dtxR-type domain is found at Met-1 to Thr-63. The Cd(2+) site is built by Asp-8, Glu-11, His-77, Glu-99, Glu-102, and His-103. 6 residues coordinate Mn(2+): Asp-8, Glu-11, His-77, Glu-99, Glu-102, and His-103.

Belongs to the DtxR/MntR family. As to quaternary structure, homodimer.

It localises to the cytoplasm. Its activity is regulated as follows. DNA binding is strongly activated by Mn(2+) and Cd(2+), but it is poorly activated by non-cognate metal cations, including Co(2+), Fe(2+), Ni(2+), Ca(2+) and Zn(2+). In the strict absence of divalent transition metal ions, MntR has a low affinity for DNA. Its function is as follows. Central regulator of manganese homeostasis that regulates the expression of both manganese uptake and efflux systems. In the presence of high levels of manganese, it mediates repression of the manganese uptake systems MntH and MntABCD and activation of the efflux systems MneP and MneS. Binds with high affinity to the regulatory regions of its target genes. The manganese concentration required for activation of efflux is higher than that for repression of uptake. The chain is HTH-type transcriptional regulator MntR from Bacillus subtilis (strain 168).